We begin with the raw amino-acid sequence, 128 residues long: Small ribosomal subunit protein uS11 (128 aa).

Belongs to the universal ribosomal protein uS11 family. As to quaternary structure, part of the 30S ribosomal subunit. Interacts with proteins S7 and S18. Binds to IF-3.

In terms of biological role, located on the platform of the 30S subunit, it bridges several disparate RNA helices of the 16S rRNA. Forms part of the Shine-Dalgarno cleft in the 70S ribosome. The protein is Small ribosomal subunit protein uS11 of Chloroherpeton thalassium (strain ATCC 35110 / GB-78).